Reading from the N-terminus, the 323-residue chain is tRNA U34 carboxymethyltransferase (323 aa).

Carboxy-S-adenosyl-L-methionine contacts are provided by residues lysine 91, tryptophan 105, lysine 110, glycine 130, 152 to 154, 181 to 182, methionine 196, tyrosine 200, and arginine 315; these read DPT and IE.

It belongs to the class I-like SAM-binding methyltransferase superfamily. CmoB family. As to quaternary structure, homotetramer.

The catalysed reaction is carboxy-S-adenosyl-L-methionine + 5-hydroxyuridine(34) in tRNA = 5-carboxymethoxyuridine(34) in tRNA + S-adenosyl-L-homocysteine + H(+). Catalyzes carboxymethyl transfer from carboxy-S-adenosyl-L-methionine (Cx-SAM) to 5-hydroxyuridine (ho5U) to form 5-carboxymethoxyuridine (cmo5U) at position 34 in tRNAs. This Escherichia coli (strain SE11) protein is tRNA U34 carboxymethyltransferase.